Consider the following 413-residue polypeptide: E3 ubiquitin ligase ICP22 (413 aa).

The disordered stretch occupies residues methionine 1–isoleucine 124. The segment covering glycine 62–glycine 76 has biased composition (basic and acidic residues). The segment covering serine 84–glycine 97 has biased composition (low complexity). Position 189 is a phosphotyrosine; by host (tyrosine 189). Disordered regions lie at residues leucine 289–glycine 334 and alanine 370–glutamate 390. Positions serine 297–aspartate 309 are enriched in acidic residues.

It belongs to the herpesviridae ICP22 family. Tyrosine phosphorylated.

Its subcellular location is the host nucleus. Its pathway is protein modification; protein ubiquitination. Functions as an E3 ubiquitin ligase and plays a role in the inhibition of innate immunity by preventing IFN-mediated signaling. Induces the ubiquitination and degradation of host STAT1, STAT2 and IRF9, resulting in the blockade of ISGF3 nuclear translocation. The sequence is that of E3 ubiquitin ligase ICP22 from Human herpesvirus 2 (strain HG52) (HHV-2).